Here is a 343-residue protein sequence, read N- to C-terminus: Geranylgeranyl pyrophosphate synthase (343 aa).

Basic and acidic residues predominate over residues 1-12 (MAYTVEPREHSK). The disordered stretch occupies residues 1-26 (MAYTVEPREHSKNTTLPTVAMPPSPP). Isopentenyl diphosphate contacts are provided by Lys69, Arg72, and His101. Mg(2+) is bound by residues Asp108 and Asp112. Arg117 lines the dimethylallyl diphosphate pocket. Arg118 provides a ligand contact to isopentenyl diphosphate. 2 residues coordinate dimethylallyl diphosphate: Thr196 and Gln229. Asp232 serves as a coordination point for Mg(2+). Positions 236, 246, and 256 each coordinate dimethylallyl diphosphate.

It belongs to the FPP/GGPP synthase family. It depends on Mg(2+) as a cofactor.

It catalyses the reaction isopentenyl diphosphate + dimethylallyl diphosphate = (2E)-geranyl diphosphate + diphosphate. The catalysed reaction is isopentenyl diphosphate + (2E)-geranyl diphosphate = (2E,6E)-farnesyl diphosphate + diphosphate. It carries out the reaction isopentenyl diphosphate + (2E,6E)-farnesyl diphosphate = (2E,6E,10E)-geranylgeranyl diphosphate + diphosphate. It participates in mycotoxin biosynthesis. Its function is as follows. Geranylgeranyl pyrophosphate synthase; part of the gene cluster that mediates the biosynthesis of aphidicolin, a specific inhibitor of eukaryotic DNA synthesis and DNA polymerase alpha. The geranylgeranyl pyrophosphate synthase GGS is required for supplying a sufficient amount of geranylgeranyl diphosphate (GGDP), the general precursor of diterpenes. The diterpene synthase ACS then catalyzes the conversion of geranylgeranyl diphosphate to aphidicolan-16-beta-ol via the intermediate syn-copalyldiphosphate (syn-CDP). In addition to aphidicolan-16-beta-ol, the enzyme also produces low levels of amphidicol-15-ene and amphidicol-16-ene. The cytochrome P450 monooxygenase P450-2 then catalyzes the two-step hydroxylation from aphidicolan-16-beta-ol to 3-deoxyaphidicolin via a 17,3-deoxyaphidicolin intermediate. Finally, the cytochrome P450 monooxygenase P450-1 converts 3-deoxyaphidicolin to aphidicolin. The sequence is that of Geranylgeranyl pyrophosphate synthase (GGS) from Neocamarosporium betae (Beet black rot fungus).